The sequence spans 691 residues: Elongation factor G (691 aa).

Residues glutamate 8–isoleucine 282 form the tr-type G domain. GTP is bound by residues alanine 17–threonine 24, aspartate 81–histidine 85, and asparagine 135–aspartate 138.

The protein belongs to the TRAFAC class translation factor GTPase superfamily. Classic translation factor GTPase family. EF-G/EF-2 subfamily.

It is found in the cytoplasm. Catalyzes the GTP-dependent ribosomal translocation step during translation elongation. During this step, the ribosome changes from the pre-translocational (PRE) to the post-translocational (POST) state as the newly formed A-site-bound peptidyl-tRNA and P-site-bound deacylated tRNA move to the P and E sites, respectively. Catalyzes the coordinated movement of the two tRNA molecules, the mRNA and conformational changes in the ribosome. This is Elongation factor G from Synechococcus sp. (strain CC9311).